We begin with the raw amino-acid sequence, 406 residues long: Calsequestrin-1 (406 aa).

The first 34 residues, 1 to 34 (MRATDRMGARAVSKLRLALLFVLVLGTPRSGVQG), serve as a signal peptide directing secretion. The residue at position 43 (tyrosine 43) is a Phosphotyrosine. Position 81 is a phosphoserine (serine 81). Threonine 124 bears the Phosphothreonine mark. Serine 216 carries the post-translational modification Phosphoserine. The N-linked (GlcNAc...) asparagine glycan is linked to asparagine 350. The interval 382–406 (EGEINTEDDDDDDDDDDDDDDDDDD) is disordered.

This sequence belongs to the calsequestrin family. Monomer; increases in response to a depletion of intracellular calcium. Homodimer. Homotetramer and homopolymer. Can form linear homooligomers. Ca(2+) ions promote oligomerization. Interacts (via C-terminal end and preferentially with the monomeric form) with STIM1; this interaction increases in response to a depletion of intracellular calcium, decreases both STIM1 aggregation and clustering, interaction of STIM1 with ORAI1 and store-operated Ca(2+) entry (SOCE) activity. Interacts with ASPH and TRDN. Post-translationally, N-glycosylated. In terms of tissue distribution, detected in skeletal muscle and in smooth muscle from vas deferens, aorta and stomach (at protein level).

It localises to the endoplasmic reticulum. The protein resides in the sarcoplasmic reticulum. Its subcellular location is the sarcoplasmic reticulum lumen. The protein localises to the sarcoplasmic reticulum membrane. It is found in the mitochondrion matrix. Functionally, calsequestrin is a high-capacity, moderate affinity, calcium-binding protein and thus acts as an internal calcium store in muscle. Calcium ions are bound by clusters of acidic residues at the protein surface, often at the interface between subunits. Can bind around 80 Ca(2+) ions. Regulates the release of lumenal Ca(2+) via the calcium release channel RYR1; this plays an important role in triggering muscle contraction. Negatively regulates store-operated Ca(2+) entry (SOCE) activity. This is Calsequestrin-1 (Casq1) from Rattus norvegicus (Rat).